Here is a 283-residue protein sequence, read N- to C-terminus: Daunorubicin resistance ABC transporter permease protein DrrB1 (283 aa).

Residues 53-280 (VQLIDIVLMP…PLTMRLYRNK (228 aa)) form the ABC transmembrane type-2 domain. Helical transmembrane passes span 58–78 (IVLMPLIFLLMFTYLFGGAFA), 85–105 (LQFYLPGVTVQAVVMMTVYTG), 150–170 (VFLGLLLGFRADGGFLGVVGA), 171–191 (MLVLIVFGFSVSWIFAALGVV), 198–218 (VSGTSMIVLYPLLFMSNIFVM), and 252–272 (FWDVGLVLCVSAGLVAVFAPL).

Belongs to the ABC-2 integral membrane protein family. The complex is probably composed of two ATP-binding proteins (DrrA1) and two transmembrane proteins (DrrB1).

Its subcellular location is the cell membrane. In terms of biological role, part of the ABC transporter complex DrrA1B1 involved in daunorubicin efflux. Responsible for the translocation of the substrate across the membrane. Confers self-resistance to daunorubicin, an antibiotic produced by S.coeruleorubidus. In Streptomyces coeruleorubidus, this protein is Daunorubicin resistance ABC transporter permease protein DrrB1.